We begin with the raw amino-acid sequence, 240 residues long: UDP-2,3-diacylglucosamine hydrolase (240 aa).

Mn(2+) is bound by residues Asp8, His10, Asp41, Asn79, and His114. 79–80 (NR) contributes to the substrate binding site. Substrate contacts are provided by Asp122, Ser160, Asn164, Lys167, and His195. Mn(2+) contacts are provided by His195 and His197.

It belongs to the LpxH family. The cofactor is Mn(2+).

The protein resides in the cell inner membrane. It carries out the reaction UDP-2-N,3-O-bis[(3R)-3-hydroxytetradecanoyl]-alpha-D-glucosamine + H2O = 2-N,3-O-bis[(3R)-3-hydroxytetradecanoyl]-alpha-D-glucosaminyl 1-phosphate + UMP + 2 H(+). It participates in glycolipid biosynthesis; lipid IV(A) biosynthesis; lipid IV(A) from (3R)-3-hydroxytetradecanoyl-[acyl-carrier-protein] and UDP-N-acetyl-alpha-D-glucosamine: step 4/6. Its function is as follows. Hydrolyzes the pyrophosphate bond of UDP-2,3-diacylglucosamine to yield 2,3-diacylglucosamine 1-phosphate (lipid X) and UMP by catalyzing the attack of water at the alpha-P atom. Involved in the biosynthesis of lipid A, a phosphorylated glycolipid that anchors the lipopolysaccharide to the outer membrane of the cell. The sequence is that of UDP-2,3-diacylglucosamine hydrolase from Enterobacter sp. (strain 638).